Consider the following 396-residue polypeptide: L-lactate dehydrogenase (396 aa).

The FMN hydroxy acid dehydrogenase domain maps to 1–380 (MIISAASDYR…SGDSLVQELG (380 aa)). Tyr-24 lines the substrate pocket. FMN-binding residues include Ser-106 and Gln-127. Tyr-129 is a substrate binding site. An FMN-binding site is contributed by Thr-155. Position 164 (Arg-164) interacts with substrate. Lys-251 contributes to the FMN binding site. His-275 functions as the Proton acceptor in the catalytic mechanism. Substrate is bound at residue Arg-278. Position 306 to 330 (306 to 330 (DSGIRNGLDVVRMIALGADTVLLGR)) interacts with FMN.

This sequence belongs to the FMN-dependent alpha-hydroxy acid dehydrogenase family. FMN is required as a cofactor.

Its subcellular location is the cell inner membrane. It catalyses the reaction (S)-lactate + A = pyruvate + AH2. Catalyzes the conversion of L-lactate to pyruvate. Is coupled to the respiratory chain. The sequence is that of L-lactate dehydrogenase from Salmonella newport (strain SL254).